A 397-amino-acid polypeptide reads, in one-letter code: 3-ketoacyl-CoA thiolase, mitochondrial (397 aa).

A mitochondrion; not cleaved-targeting transit peptide spans 1–16; it reads MALLRGVFIVAAKRTP. At K25 the chain carries N6-acetyllysine; alternate. N6-succinyllysine; alternate is present on K25. An N6-succinyllysine modification is found at K45. Residue C92 is the Acyl-thioester intermediate of the active site. A Phosphothreonine modification is found at T119. S121 is subject to Phosphoserine. Position 127 is a phosphotyrosine (Y127). T136 is subject to Phosphothreonine. K137, K143, K158, K171, K191, and K209 each carry N6-acetyllysine; alternate. N6-succinyllysine; alternate occurs at positions 137, 143, 158, 171, 191, and 209. N6-succinyllysine occurs at positions 211, 212, and 214. The CoA site is built by R224 and T227. Residue K240 is modified to N6-succinyllysine. Position 241 is an N6-acetyllysine (K241). S251 contacts CoA. An N6-acetyllysine mark is found at K269 and K270. Residue K305 is modified to N6-acetyllysine; alternate. K305 bears the N6-succinyllysine; alternate mark. Position 310 is a phosphoserine (S310). N6-acetyllysine; alternate is present on K312. N6-succinyllysine; alternate is present on K312. Phosphoserine is present on S333. K340 carries the N6-acetyllysine modification. Position 344 is a phosphoserine (S344). K375 is modified (N6-acetyllysine). C382 functions as the Proton donor/acceptor in the catalytic mechanism.

Belongs to the thiolase-like superfamily. Thiolase family. In terms of assembly, homotetramer. Interacts with BNIP3. Expressed in liver, brown adipose tissue and heart (at protein level).

The protein localises to the mitochondrion. It catalyses the reaction an acyl-CoA + acetyl-CoA = a 3-oxoacyl-CoA + CoA. The enzyme catalyses 2 acetyl-CoA = acetoacetyl-CoA + CoA. It carries out the reaction acetyl-CoA + H2O = acetate + CoA + H(+). The catalysed reaction is propanoyl-CoA + H2O = propanoate + CoA + H(+). It catalyses the reaction butanoyl-CoA + H2O = butanoate + CoA + H(+). The enzyme catalyses hexanoyl-CoA + H2O = hexanoate + CoA + H(+). It carries out the reaction octanoyl-CoA + H2O = octanoate + CoA + H(+). The catalysed reaction is decanoyl-CoA + H2O = decanoate + CoA + H(+). It catalyses the reaction dodecanoyl-CoA + H2O = dodecanoate + CoA + H(+). The enzyme catalyses tetradecanoyl-CoA + H2O = tetradecanoate + CoA + H(+). It carries out the reaction hexadecanoyl-CoA + H2O = hexadecanoate + CoA + H(+). It participates in lipid metabolism; fatty acid beta-oxidation. With respect to regulation, the 3-oxoacetyl-CoA thiolase activity is inhibited by acetyl-CoA while the acetyl-CoA hydrolase activity is inhibited by acetoacetyl-CoA. In the production of energy from fats, this is one of the enzymes that catalyzes the last step of the mitochondrial beta-oxidation pathway, an aerobic process breaking down fatty acids into acetyl-CoA. Using free coenzyme A/CoA, catalyzes the thiolytic cleavage of medium- to long-chain unbranched 3-oxoacyl-CoAs into acetyl-CoA and a fatty acyl-CoA shortened by two carbon atoms. Also catalyzes the condensation of two acetyl-CoA molecules into acetoacetyl-CoA and could be involved in the production of ketone bodies. Also displays hydrolase activity on various fatty acyl-CoAs. Thereby, could be responsible for the production of acetate in a side reaction to beta-oxidation. Abolishes BNIP3-mediated apoptosis and mitochondrial damage. The polypeptide is 3-ketoacyl-CoA thiolase, mitochondrial (Acaa2) (Rattus norvegicus (Rat)).